Here is a 405-residue protein sequence, read N- to C-terminus: uncharacterized protein (405 aa).

Helical transmembrane passes span 3 to 23, 42 to 62, 73 to 93, 95 to 115, 135 to 155, 162 to 182, 209 to 229, 248 to 268, 280 to 300, 309 to 329, 346 to 366, and 377 to 397; these read IIAK…PTTE, GITQ…ILTL, PIAL…IFAV, IEML…GSVI, SLSP…GYII, YVFV…YKVL, ILWL…GFFI, KLAF…GYLI, GLGF…AFIL, LAIA…NLLI, TAGS…TYLV, and FALL…CIWV.

The protein belongs to the major facilitator superfamily. Bcr/CmlA family.

It is found in the cell inner membrane. This is an uncharacterized protein from Rickettsia felis (strain ATCC VR-1525 / URRWXCal2) (Rickettsia azadi).